The primary structure comprises 337 residues: Holliday junction branch migration complex subunit RuvB (337 aa).

Positions 1–179 (MTHQVSVLHQ…FSFTGRMSYY (179 aa)) are large ATPase domain (RuvB-L). ATP-binding positions include Leu-18, Arg-19, Gly-60, Lys-63, Thr-64, Ser-65, 126-128 (EDY), Arg-169, Tyr-179, and Arg-216. Residue Thr-64 coordinates Mg(2+). Residues 180-250 (SDEDLTTILK…VAEKALAMLL (71 aa)) form a small ATPAse domain (RuvB-S) region. Residues 253 to 337 (DWGLNEIDIK…DNLQSLGEEK (85 aa)) are head domain (RuvB-H). The DNA site is built by Lys-308 and Arg-313.

The protein belongs to the RuvB family. Homohexamer. Forms an RuvA(8)-RuvB(12)-Holliday junction (HJ) complex. HJ DNA is sandwiched between 2 RuvA tetramers; dsDNA enters through RuvA and exits via RuvB. An RuvB hexamer assembles on each DNA strand where it exits the tetramer. Each RuvB hexamer is contacted by two RuvA subunits (via domain III) on 2 adjacent RuvB subunits; this complex drives branch migration. In the full resolvosome a probable DNA-RuvA(4)-RuvB(12)-RuvC(2) complex forms which resolves the HJ.

The protein localises to the cytoplasm. It carries out the reaction ATP + H2O = ADP + phosphate + H(+). Functionally, the RuvA-RuvB-RuvC complex processes Holliday junction (HJ) DNA during genetic recombination and DNA repair, while the RuvA-RuvB complex plays an important role in the rescue of blocked DNA replication forks via replication fork reversal (RFR). RuvA specifically binds to HJ cruciform DNA, conferring on it an open structure. The RuvB hexamer acts as an ATP-dependent pump, pulling dsDNA into and through the RuvAB complex. RuvB forms 2 homohexamers on either side of HJ DNA bound by 1 or 2 RuvA tetramers; 4 subunits per hexamer contact DNA at a time. Coordinated motions by a converter formed by DNA-disengaged RuvB subunits stimulates ATP hydrolysis and nucleotide exchange. Immobilization of the converter enables RuvB to convert the ATP-contained energy into a lever motion, pulling 2 nucleotides of DNA out of the RuvA tetramer per ATP hydrolyzed, thus driving DNA branch migration. The RuvB motors rotate together with the DNA substrate, which together with the progressing nucleotide cycle form the mechanistic basis for DNA recombination by continuous HJ branch migration. Branch migration allows RuvC to scan DNA until it finds its consensus sequence, where it cleaves and resolves cruciform DNA. The chain is Holliday junction branch migration complex subunit RuvB from Chlamydia caviae (strain ATCC VR-813 / DSM 19441 / 03DC25 / GPIC) (Chlamydophila caviae).